The chain runs to 171 residues: Small ribosomal subunit protein uS5 (171 aa).

The region spanning 13–76 (FLERLVAVNR…DQAKKNLVTI (64 aa)) is the S5 DRBM domain.

Belongs to the universal ribosomal protein uS5 family. As to quaternary structure, part of the 30S ribosomal subunit. Contacts proteins S4 and S8.

Its function is as follows. With S4 and S12 plays an important role in translational accuracy. Functionally, located at the back of the 30S subunit body where it stabilizes the conformation of the head with respect to the body. This chain is Small ribosomal subunit protein uS5, found in Dichelobacter nodosus (strain VCS1703A).